The following is a 1335-amino-acid chain: Protein SPATA31F1 (1335 aa).

Residues 8–28 (LWEVGYPLYIYGSIFIVIVII) form a helical membrane-spanning segment. Disordered stretches follow at residues 403-424 (ALKA…SGSD), 480-502 (LPKT…MSPS), 972-1002 (VQQN…SGDM), 1019-1141 (PSLE…LQDS), and 1248-1335 (ENVA…GHPT). The segment covering 414-424 (SGGQDNDSGSD) has biased composition (polar residues). Polar residues predominate over residues 972-1000 (VQQNQKQSNSKAVPQGSAHSVSKISQPSG). 3 stretches are compositionally biased toward basic and acidic residues: residues 1047–1064 (NRED…REGD), 1071–1083 (STRE…EDQR), and 1129–1139 (PGEKESEKDLQ).

It belongs to the SPATA31 family.

The protein localises to the membrane. The polypeptide is Protein SPATA31F1 (Homo sapiens (Human)).